The chain runs to 471 residues: Putative multidrug resistance protein MdtD (471 aa).

The next 13 helical transmembrane spans lie at leucine 12–alanine 32, methionine 49–alanine 69, isoleucine 72–cysteine 92, leucine 101–valine 123, phenylalanine 138–valine 158, tryptophan 165–methionine 185, phenylalanine 195–aspartate 215, leucine 220–tryptophan 240, isoleucine 265–proline 285, valine 286–methionine 306, leucine 342–phenylalanine 362, leucine 393–leucine 413, and valine 431–alanine 451.

It belongs to the major facilitator superfamily. TCR/Tet family.

It is found in the cell inner membrane. This is Putative multidrug resistance protein MdtD from Enterobacter sp. (strain 638).